A 447-amino-acid polypeptide reads, in one-letter code: UPF0597 protein Amet_4665 (447 aa).

It belongs to the UPF0597 family.

This chain is UPF0597 protein Amet_4665, found in Alkaliphilus metalliredigens (strain QYMF).